The primary structure comprises 124 residues: FK506-binding protein 1 (124 aa).

Residues 23 to 122 (GDTVTIHYDG…VFEVELLGVN (100 aa)) enclose the PPIase FKBP-type domain.

This sequence belongs to the FKBP-type PPIase family. FKBP1 subfamily.

The protein resides in the cytoplasm. It catalyses the reaction [protein]-peptidylproline (omega=180) = [protein]-peptidylproline (omega=0). Its activity is regulated as follows. Inhibited by rapamycin. In terms of biological role, PPIases accelerate the folding of proteins. It catalyzes the cis-trans isomerization of proline imidic peptide bonds in oligopeptides. The protein is FK506-binding protein 1 (RBP1) of Candida albicans (strain SC5314 / ATCC MYA-2876) (Yeast).